Reading from the N-terminus, the 1683-residue chain is ABC transporter 7 (1683 aa).

The helical transmembrane segment at 24 to 44 (DYLRILLPAVVIGLSVLNLGF) threads the bilayer. Residues 53–93 (RSKSPSTHAYAPVSNGDNSRPGAHRTDISPDDDAIAQDDED) are disordered. Residues 81–93 (SPDDDAIAQDDED) show a composition bias toward acidic residues. 4 helical membrane-spanning segments follow: residues 127–147 (LSVV…VIAL), 157–177 (TLTG…LATL), 190–210 (HLWN…IGIF), and 221–241 (LAQI…FMAI). N247 carries an N-linked (GlcNAc...) asparagine glycan. 2 helical membrane passes run 336-356 (GWAV…KAIL) and 368-388 (SVVW…SLGD). The ABC transmembrane type-1 1 domain maps to 338 to 664 (AVMSGMFTFA…LGDMLAHVQE (327 aa)). Positions 451–473 (GDNDESEDGKDGDKDKEDSSDEQ) are disordered. N489 carries an N-linked (GlcNAc...) asparagine glycan. The next 2 membrane-spanning stretches (helical) occupy residues 496 to 516 (YLHF…VLLY) and 518 to 538 (VLGM…PVNI). N545 is a glycosylation site (N-linked (GlcNAc...) asparagine). The next 2 helical transmembrane spans lie at 602–622 (VWAC…FFSF) and 632–648 (PLHP…FMLL). The region spanning 700 to 949 (IALKDAAFIW…GALGEEIAQK (250 aa)) is the ABC transporter 1 domain. Residue 742 to 749 (GPTGSGKT) participates in ATP binding. Residues 952-998 (SETPNISRIPSRVPSSVGEGSGNTLLDTDGDDHLSKPKNAKKAKKAE) form a disordered region. A glycan (N-linked (GlcNAc...) asparagine) is linked at N956. Residues 1016 to 1036 (LYLASMGSWWFWVVAGCIFIS) traverse the membrane as a helical segment. Positions 1028–1351 (VVAGCIFISQ…NILWLVRLYS (324 aa)) constitute an ABC transmembrane type-1 2 domain. N1097 carries N-linked (GlcNAc...) asparagine glycosylation. Helical transmembrane passes span 1111–1131 (AQYY…TAFL), 1182–1202 (VDQE…GITV), and 1204–1224 (VVLI…ITIA). N-linked (GlcNAc...) asparagine glycosylation occurs at N1277. 2 helical membrane-spanning segments follow: residues 1304-1324 (LLGD…IGVI) and 1327-1347 (GWAG…LWLV). Residues 1392 to 1649 (VEFINYTTSY…GEGGSFKSMC (258 aa)) form the ABC transporter 2 domain. N1396 and N1411 each carry an N-linked (GlcNAc...) asparagine glycan. 1426–1433 (GRTGAGKS) serves as a coordination point for ATP. N-linked (GlcNAc...) asparagine glycans are attached at residues N1541 and N1552.

This sequence belongs to the ABC transporter superfamily.

The protein resides in the membrane. Functionally, ABC transporter; part of the gene cluster that mediates the biosynthesis of pyriculol and pyriculariol, two heptaketides that induce lesion formation upon application on rice leaves but are dispensable for pathogenicity. With the MFS transporter MFS1, is most likely responsible for pyriculol and pyriculariol secretion and thereby may contribute to intrinsic resistance. This Pyricularia oryzae (strain 70-15 / ATCC MYA-4617 / FGSC 8958) (Rice blast fungus) protein is ABC transporter 7.